The primary structure comprises 112 residues: Nitrogen regulatory protein P-II (112 aa).

O-UMP-tyrosine is present on Y51.

This sequence belongs to the P(II) protein family. In terms of assembly, homotrimer.

P-II indirectly controls the transcription of the glutamine synthetase gene (glnA). P-II prevents NR-II-catalyzed conversion of NR-I to NR-I-phosphate, the transcriptional activator of glnA. When P-II is uridylylated to P-II-UMP, these events are reversed. When the ratio of Gln to 2-ketoglutarate decreases, P-II is uridylylated to P-II-UMP, which causes the deadenylation of glutamine synthetase, so activating the enzyme. This chain is Nitrogen regulatory protein P-II (glnB), found in Rhodobacter capsulatus (Rhodopseudomonas capsulata).